An 888-amino-acid chain; its full sequence is Autotaxin (888 aa).

An N-terminal signal peptide occupies residues 1–27 (MARRRSCQLHQVISLFTFAVGVNICLG). Positions 28–35 (VTANRIKR) are cleaved as a propeptide — removed by furin. A glycan (N-linked (GlcNAc...) asparagine) is linked at asparagine 54. 2 consecutive SMB domains span residues 55 to 98 (ISGS…LKTA) and 99 to 143 (GGWE…GESH). Intrachain disulfides connect cysteine 59-cysteine 76, cysteine 63-cysteine 94, cysteine 74-cysteine 87, cysteine 80-cysteine 86, cysteine 103-cysteine 120, cysteine 108-cysteine 138, cysteine 118-cysteine 131, cysteine 124-cysteine 130, cysteine 149-cysteine 195, and cysteine 157-cysteine 351. The Cell attachment site motif lies at 127-129 (RGD). Positions 145-502 (VDDDCEEIKT…PTFKYKTKVP (358 aa)) are phosphodiesterase. Zn(2+) contacts are provided by aspartate 172 and threonine 210. Catalysis depends on threonine 210, which acts as the Nucleophile. Positions 210, 231, and 312 each coordinate 1-(9Z-octadecenoyl)-sn-glycero-3-phosphate. Residues threonine 210, asparagine 231, and aspartate 312 each contribute to the 1-hexadecanoyl-sn-glycero-3-phosphate site. 1-tetradecanoyl-sn-glycerol 3-phosphate contacts are provided by threonine 210, asparagine 231, and aspartate 312. Residues aspartate 312, histidine 316, aspartate 359, and histidine 360 each coordinate Zn(2+). Intrachain disulfides connect cysteine 367–cysteine 469, cysteine 414–cysteine 831, cysteine 567–cysteine 692, cysteine 569–cysteine 677, and cysteine 800–cysteine 810. An N-linked (GlcNAc...) asparagine glycan is attached at asparagine 411. Histidine 475 is a binding site for Zn(2+). Histidine 475 lines the 1-(9Z-octadecenoyl)-sn-glycero-3-phosphate pocket. Position 475 (histidine 475) interacts with 1-hexadecanoyl-sn-glycero-3-phosphate. 1-tetradecanoyl-sn-glycerol 3-phosphate is bound at residue histidine 475. N-linked (GlcNAc...) asparagine glycosylation occurs at asparagine 525. Residues 623–888 (LYGRPAVLYR…TYLQTYESEI (266 aa)) form a nuclease-like domain region. The Ca(2+) site is built by aspartate 765, aspartate 767, aspartate 769, leucine 771, and aspartate 773. N-linked (GlcNAc...) asparagine glycosylation is present at asparagine 832. The segment at 855–876 (IEHLTSLDFFRKTSRSYPEILT) is required for secretion.

It belongs to the nucleotide pyrophosphatase/phosphodiesterase family. Zn(2+) serves as cofactor. It depends on Ca(2+) as a cofactor. Post-translationally, N-glycosylation, but not furin-cleavage, plays a critical role on secretion and on lysoPLD activity. The interdomain disulfide bond between Cys-414 and Cys-831 is essential for catalytic activity. In terms of tissue distribution, detected in fetal serum (at protein level).

The protein resides in the secreted. It catalyses the reaction a 1-O-alkyl-sn-glycero-3-phosphoethanolamine + H2O = a 1-O-alkyl-sn-glycero-3-phosphate + ethanolamine + H(+). The enzyme catalyses a 1-acyl-sn-glycero-3-phosphoethanolamine + H2O = a 1-acyl-sn-glycero-3-phosphate + ethanolamine + H(+). The catalysed reaction is 1-(9Z-octadecenoyl)-sn-glycero-3-phosphoethanolamine + H2O = 1-(9Z-octadecenoyl)-sn-glycero-3-phosphate + ethanolamine + H(+). It carries out the reaction a 1-O-alkyl-sn-glycero-3-phosphocholine + H2O = a 1-O-alkyl-sn-glycero-3-phosphate + choline + H(+). It catalyses the reaction 1-O-(9Z-octadecenyl)-sn-glycero-3-phosphocholine + H2O = 1-O-(9Z-octadecenyl)-sn-glycero-3-phosphate + choline + H(+). The enzyme catalyses 1-O-hexadecyl-sn-glycero-3-phosphocholine + H2O = 1-O-hexadecyl-sn-glycero-3-phosphate + choline + H(+). The catalysed reaction is a 1-O-(1Z-alkenyl)-sn-glycero-3-phosphocholine + H2O = a 1-O-(1Z-alkenyl)-sn-glycero-3-phosphate + choline + H(+). It carries out the reaction a 1-acyl-sn-glycero-3-phosphocholine + H2O = a 1-acyl-sn-glycero-3-phosphate + choline + H(+). It catalyses the reaction 1-dodecanoyl-sn-glycero-3-phosphocholine + H2O = 1-dodecanoyl-sn-glycerol 3-phosphate + choline + H(+). The enzyme catalyses 1-(9Z-octadecenoyl)-sn-glycero-3-phosphocholine + H2O = 1-(9Z-octadecenoyl)-sn-glycero-3-phosphate + choline + H(+). The catalysed reaction is 1-tetradecanoyl-sn-glycero-3-phosphocholine + H2O = 1-tetradecanoyl-sn-glycerol 3-phosphate + choline + H(+). It carries out the reaction 1-decanoyl-sn-glycero-3-phosphocholine + H2O = 1-decanoyl-sn-glycero-3-phosphate + choline + H(+). It catalyses the reaction 1-octadecanoyl-sn-glycero-3-phosphocholine + H2O = 1-octadecanoyl-sn-glycero-3-phosphate + choline + H(+). The enzyme catalyses 1-hexadecanoyl-sn-glycero-3-phosphocholine + H2O = 1-hexadecanoyl-sn-glycero-3-phosphate + choline + H(+). The catalysed reaction is 1-hexanoyl-sn-glycero-3-phosphocholine + H2O = 1-hexanoyl-sn-glycero-3-phosphate + choline + H(+). It carries out the reaction 1-(9Z,12Z)-octadecadienoyl-sn-glycero-3-phosphocholine + H2O = 1-(9Z,12Z)-octadecadienoyl-sn-glycero-3-phosphate + choline + H(+). It catalyses the reaction sphing-4-enine-phosphocholine + H2O = sphing-4-enine 1-phosphate + choline + H(+). The enzyme catalyses 1-(5Z,8Z,11Z,14Z-eicosatetraenoyl)-sn-glycero-3-phosphocholine + H2O = 1-(5Z,8Z,11Z,14Z-eicosatetraenoyl)-sn-glycero-3-phosphate + choline + H(+). The catalysed reaction is a 2-acyl-sn-glycero-3-phosphocholine + H2O = a 2-acyl-sn-glycerol 3-phosphate + choline + H(+). It carries out the reaction a 1,2-diacyl-sn-glycero-3-phosphocholine + H2O = a 1,2-diacyl-sn-glycero-3-phosphate + choline + H(+). It catalyses the reaction 1,2-dioctanoyl-sn-glycero-3-phosphocholine + H2O = 1,2-dioctanoyl-sn-glycero-3-phosphate + choline + H(+). The enzyme catalyses 1,2-didecanoyl-sn-glycero-3-phosphocholine + H2O = 1,2-didecanoyl-sn-glycero-3-phosphate + choline + H(+). The catalysed reaction is a 1-acyl-sn-glycero-3-phospho-L-serine + H2O = a 1-acyl-sn-glycero-3-phosphate + L-serine + H(+). It carries out the reaction 1-(9Z-octadecenoyl)-sn-glycero-3-phospho-L-serine + H2O = 1-(9Z-octadecenoyl)-sn-glycero-3-phosphate + L-serine + H(+). It catalyses the reaction a 2-acyl-sn-glycero-3-phospho-L-serine + H2O = a 2-acyl-sn-glycerol 3-phosphate + L-serine + H(+). In terms of biological role, secreted lysophospholipase D that hydrolyzes lysophospholipids to produce the signaling molecule lysophosphatidic acid (LPA) in extracellular fluids. Its major substrate is lysophosphatidylcholine. Can also act on sphingosylphosphorylcholine producing sphingosine-1-phosphate, a modulator of cell motility. Can hydrolyze, in vitro, bis-pNPP, to some extent pNP-TMP, and barely ATP. Involved in several motility-related processes such as angiogenesis and neurite outgrowth. Acts as an angiogenic factor by stimulating migration of smooth muscle cells and microtubule formation. Stimulates migration of melanoma cells, probably via a pertussis toxin-sensitive G protein. May have a role in induction of parturition. Possible involvement in cell proliferation and adipose tissue development. Required for LPA production in activated platelets, cleaves the sn-1 lysophospholipids to generate sn-1 lysophosphatidic acids containing predominantly 18:2 and 20:4 fatty acids. Shows a preference for the sn-1 to the sn-2 isomer of 1-O-alkyl-sn-glycero-3-phosphocholine (lyso-PAF). The sequence is that of Autotaxin from Bos taurus (Bovine).